A 552-amino-acid chain; its full sequence is CTP synthase (552 aa).

Positions 1 to 273 are amidoligase domain; that stretch reads MSESKKNPET…LTPIARRFNM (273 aa). Ser21 contributes to the CTP binding site. Ser21 serves as a coordination point for UTP. Residues 22–27 and Asp79 each bind ATP; that span reads SLGKGI. The Mg(2+) site is built by Asp79 and Glu147. Residues 154–156, 194–199, and Lys230 each bind CTP; these read DIE and KTKPTQ. Residues 194-199 and Lys230 contribute to the UTP site; that span reads KTKPTQ. The 251-residue stretch at 298–548 folds into the Glutamine amidotransferase type-1 domain; that stretch reads TIAFVGKYLS…IQKSLELKKV (251 aa). Gly359 contributes to the L-glutamine binding site. Cys386 functions as the Nucleophile; for glutamine hydrolysis in the catalytic mechanism. L-glutamine is bound by residues 387-390, Glu410, and Arg478; that span reads LGMQ. Active-site residues include His521 and Glu523.

Belongs to the CTP synthase family. In terms of assembly, homotetramer.

It carries out the reaction UTP + L-glutamine + ATP + H2O = CTP + L-glutamate + ADP + phosphate + 2 H(+). It catalyses the reaction L-glutamine + H2O = L-glutamate + NH4(+). The enzyme catalyses UTP + NH4(+) + ATP = CTP + ADP + phosphate + 2 H(+). It functions in the pathway pyrimidine metabolism; CTP biosynthesis via de novo pathway; CTP from UDP: step 2/2. Allosterically activated by GTP, when glutamine is the substrate; GTP has no effect on the reaction when ammonia is the substrate. The allosteric effector GTP functions by stabilizing the protein conformation that binds the tetrahedral intermediate(s) formed during glutamine hydrolysis. Inhibited by the product CTP, via allosteric rather than competitive inhibition. In terms of biological role, catalyzes the ATP-dependent amination of UTP to CTP with either L-glutamine or ammonia as the source of nitrogen. Regulates intracellular CTP levels through interactions with the four ribonucleotide triphosphates. The polypeptide is CTP synthase (Wolinella succinogenes (strain ATCC 29543 / DSM 1740 / CCUG 13145 / JCM 31913 / LMG 7466 / NCTC 11488 / FDC 602W) (Vibrio succinogenes)).